The following is a 191-amino-acid chain: Peptidyl-tRNA hydrolase (191 aa).

Position 17 (Y17) interacts with tRNA. The active-site Proton acceptor is H22. Positions 68, 70, and 116 each coordinate tRNA.

The protein belongs to the PTH family. In terms of assembly, monomer.

It localises to the cytoplasm. It carries out the reaction an N-acyl-L-alpha-aminoacyl-tRNA + H2O = an N-acyl-L-amino acid + a tRNA + H(+). Hydrolyzes ribosome-free peptidyl-tRNAs (with 1 or more amino acids incorporated), which drop off the ribosome during protein synthesis, or as a result of ribosome stalling. Functionally, catalyzes the release of premature peptidyl moieties from peptidyl-tRNA molecules trapped in stalled 50S ribosomal subunits, and thus maintains levels of free tRNAs and 50S ribosomes. This is Peptidyl-tRNA hydrolase from Mycobacterium marinum (strain ATCC BAA-535 / M).